A 640-amino-acid polypeptide reads, in one-letter code: Chaperone protein HtpG (640 aa).

The tract at residues 1–343 is a; substrate-binding; that stretch reads MQTAENIEHL…SSDLPLNVSR (343 aa). The b stretch occupies residues 344–564; the sequence is EILQESKDID…THDVSGNLGR (221 aa). Positions 565 to 640 are c; the sequence is LLKSAGQKVP…LLLQNILSGK (76 aa).

This sequence belongs to the heat shock protein 90 family. In terms of assembly, homodimer.

It localises to the cytoplasm. Its function is as follows. Molecular chaperone. Has ATPase activity. This Nitrosomonas europaea (strain ATCC 19718 / CIP 103999 / KCTC 2705 / NBRC 14298) protein is Chaperone protein HtpG.